The sequence spans 623 residues: Myosin light chain kinase 2, skeletal/cardiac muscle (623 aa).

2 disordered regions span residues 1–179 and 204–251; these read MATE…PSCP and GVPV…QGDT. Ala-2 carries the post-translational modification N-acetylalanine. Positions 20 to 31 are enriched in low complexity; sequence APKAAAGEGPPA. 2 stretches are compositionally biased toward basic and acidic residues: residues 32–43 and 49–89; these read AEKDPGPPDPQK and DPEK…EKGD. A compositionally biased stretch (low complexity) spans 90–102; it reads GASAQPSASSQGP. Residues 150–159 show a composition bias toward basic and acidic residues; that stretch reads GEAKEQKKVA. Phosphoserine occurs at positions 169, 175, and 177. Low complexity predominate over residues 204 to 214; that stretch reads GVPVTPGPTET. The segment covering 215 to 224 has biased composition (basic and acidic residues); sequence EPAKVAEGEK. Residues 312–567 form the Protein kinase domain; the sequence is LNSKEALGGG…AAQCLAHPWL (256 aa). Residues 318–326 and Lys-341 each bind ATP; that span reads LGGGKFGAV. The active-site Proton acceptor is the Asp-433. Thr-472 carries the post-translational modification Phosphothreonine. The interval 601–613 is calmodulin-binding; sequence IAVSAANRFKKIS.

The protein belongs to the protein kinase superfamily. CAMK Ser/Thr protein kinase family. As to quaternary structure, may interact with centrin.

Its subcellular location is the cytoplasm. The enzyme catalyses L-seryl-[myosin light chain] + ATP = O-phospho-L-seryl-[myosin light chain] + ADP + H(+). It carries out the reaction L-threonyl-[myosin light chain] + ATP = O-phospho-L-threonyl-[myosin light chain] + ADP + H(+). Its function is as follows. Implicated in the level of global muscle contraction and cardiac function. Phosphorylates a specific serine in the N-terminus of a myosin light chain. This chain is Myosin light chain kinase 2, skeletal/cardiac muscle (MYLK2), found in Bos taurus (Bovine).